The chain runs to 1083 residues: DNA-directed RNA polymerase subunit beta (1083 aa).

It belongs to the RNA polymerase beta chain family. As to quaternary structure, in plastids the minimal PEP RNA polymerase catalytic core is composed of four subunits: alpha, beta, beta', and beta''. When a (nuclear-encoded) sigma factor is associated with the core the holoenzyme is formed, which can initiate transcription.

The protein localises to the plastid. Its subcellular location is the chloroplast. The enzyme catalyses RNA(n) + a ribonucleoside 5'-triphosphate = RNA(n+1) + diphosphate. Functionally, DNA-dependent RNA polymerase catalyzes the transcription of DNA into RNA using the four ribonucleoside triphosphates as substrates. The sequence is that of DNA-directed RNA polymerase subunit beta from Acorus calamus var. americanus (American sweet flag).